Here is a 3095-residue protein sequence, read N- to C-terminus: HD protein homolog (3095 aa).

5 disordered regions span residues Pro105–Ala197, Gln536–Gly561, Pro1312–Ile1371, Lys1509–Ser1547, and Lys2005–Glu2037. The span at Ser115–Gln139 shows a compositional bias: polar residues. Composition is skewed to low complexity over residues Ser140–Ala197 and Gln536–Gln551. Positions His552–Gly561 are enriched in polar residues. Composition is skewed to low complexity over residues Gln1315–Ser1368, Ser1510–Ser1547, and Thr2008–Ile2018.

The protein belongs to the huntingtin family.

It is found in the cytoplasm. It localises to the nucleus. Its function is as follows. May play a role in microtubule-mediated transport or vesicle function. The chain is HD protein homolog (htt) from Dictyostelium discoideum (Social amoeba).